Reading from the N-terminus, the 238-residue chain is ATP synthase subunit a (238 aa).

5 consecutive transmembrane segments (helical) span residues 18–38 (MSTV…TFIG), 76–96 (FIVL…LGLP), 117–137 (VLTL…GIKI), 195–215 (LIGM…GLFI), and 216–236 (GAIQ…HKVE).

The protein belongs to the ATPase A chain family. As to quaternary structure, F-type ATPases have 2 components, CF(1) - the catalytic core - and CF(0) - the membrane proton channel. CF(1) has five subunits: alpha(3), beta(3), gamma(1), delta(1), epsilon(1). CF(0) has three main subunits: a(1), b(2) and c(9-12). The alpha and beta chains form an alternating ring which encloses part of the gamma chain. CF(1) is attached to CF(0) by a central stalk formed by the gamma and epsilon chains, while a peripheral stalk is formed by the delta and b chains.

The protein resides in the cell membrane. Functionally, key component of the proton channel; it plays a direct role in the translocation of protons across the membrane. This Alkalihalophilus pseudofirmus (strain ATCC BAA-2126 / JCM 17055 / OF4) (Bacillus pseudofirmus) protein is ATP synthase subunit a.